The following is a 320-amino-acid chain: Aspartate carbamoyltransferase catalytic subunit (320 aa).

Positions 68 and 69 each coordinate carbamoyl phosphate. Position 96 (lysine 96) interacts with L-aspartate. Carbamoyl phosphate contacts are provided by arginine 118, histidine 148, and glutamine 151. Arginine 181 and arginine 236 together coordinate L-aspartate. Carbamoyl phosphate contacts are provided by glycine 277 and proline 278.

This sequence belongs to the aspartate/ornithine carbamoyltransferase superfamily. ATCase family. Heterododecamer (2C3:3R2) of six catalytic PyrB chains organized as two trimers (C3), and six regulatory PyrI chains organized as three dimers (R2).

It carries out the reaction carbamoyl phosphate + L-aspartate = N-carbamoyl-L-aspartate + phosphate + H(+). It participates in pyrimidine metabolism; UMP biosynthesis via de novo pathway; (S)-dihydroorotate from bicarbonate: step 2/3. Its function is as follows. Catalyzes the condensation of carbamoyl phosphate and aspartate to form carbamoyl aspartate and inorganic phosphate, the committed step in the de novo pyrimidine nucleotide biosynthesis pathway. The sequence is that of Aspartate carbamoyltransferase catalytic subunit from Acidovorax ebreus (strain TPSY) (Diaphorobacter sp. (strain TPSY)).